The primary structure comprises 326 residues: ATP synthase gamma chain (326 aa).

It belongs to the ATPase gamma chain family. F-type ATPases have 2 components, CF(1) - the catalytic core - and CF(0) - the membrane proton channel. CF(1) has five subunits: alpha(3), beta(3), gamma(1), delta(1), epsilon(1). CF(0) has three main subunits: a, b and c.

The protein localises to the cell membrane. In terms of biological role, produces ATP from ADP in the presence of a proton gradient across the membrane. The gamma chain is believed to be important in regulating ATPase activity and the flow of protons through the CF(0) complex. In Rhodococcus opacus (strain B4), this protein is ATP synthase gamma chain.